We begin with the raw amino-acid sequence, 126 residues long: MSSIETLVEEIGKLTLTEASELVKALEEKFGVSAAPAVMAGAVMAAPAGEAAAAEEKTEFDVVLKSAGANKINVIKVVRAITGLGLKEAKDMVDGAPKTVKEAVSKDEAEKIAKELKDAGAEVELN.

It belongs to the bacterial ribosomal protein bL12 family. In terms of assembly, homodimer. Part of the ribosomal stalk of the 50S ribosomal subunit. Forms a multimeric L10(L12)X complex, where L10 forms an elongated spine to which 2 to 4 L12 dimers bind in a sequential fashion. Binds GTP-bound translation factors.

Functionally, forms part of the ribosomal stalk which helps the ribosome interact with GTP-bound translation factors. Is thus essential for accurate translation. This Chlorobaculum tepidum (strain ATCC 49652 / DSM 12025 / NBRC 103806 / TLS) (Chlorobium tepidum) protein is Large ribosomal subunit protein bL12.